Here is a 216-residue protein sequence, read N- to C-terminus: Ribosomal RNA large subunit methyltransferase E (216 aa).

Glycine 60, tryptophan 62, aspartate 80, aspartate 96, and aspartate 121 together coordinate S-adenosyl-L-methionine. The Proton acceptor role is filled by lysine 161.

It belongs to the class I-like SAM-binding methyltransferase superfamily. RNA methyltransferase RlmE family.

Its subcellular location is the cytoplasm. It catalyses the reaction uridine(2552) in 23S rRNA + S-adenosyl-L-methionine = 2'-O-methyluridine(2552) in 23S rRNA + S-adenosyl-L-homocysteine + H(+). Specifically methylates the uridine in position 2552 of 23S rRNA at the 2'-O position of the ribose in the fully assembled 50S ribosomal subunit. The protein is Ribosomal RNA large subunit methyltransferase E of Pseudomonas syringae pv. syringae (strain B728a).